Consider the following 722-residue polypeptide: Glycine--tRNA ligase beta subunit (722 aa).

The protein belongs to the class-II aminoacyl-tRNA synthetase family. Tetramer of two alpha and two beta subunits.

It is found in the cytoplasm. It catalyses the reaction tRNA(Gly) + glycine + ATP = glycyl-tRNA(Gly) + AMP + diphosphate. This chain is Glycine--tRNA ligase beta subunit, found in Xylella fastidiosa (strain Temecula1 / ATCC 700964).